Here is a 212-residue protein sequence, read N- to C-terminus: Glutathione S-transferase (212 aa).

Positions 1–82 constitute a GST N-terminal domain; it reads MGMKLHGPAM…YIAHTYADKG (82 aa). Glutathione contacts are provided by residues Ser11, 12–13, 40–41, 53–54, and 66–67; these read PA, HK, QV, and ES. In terms of domain architecture, GST C-terminal spans 89-212; that stretch reads DPKKMAIMSV…AWSKAIEYKQ (124 aa).

The protein belongs to the GST superfamily. Phi family.

The catalysed reaction is RX + glutathione = an S-substituted glutathione + a halide anion + H(+). Its function is as follows. Conjugation of reduced glutathione to a wide number of exogenous and endogenous hydrophobic electrophiles. The polypeptide is Glutathione S-transferase (Hyoscyamus muticus (Egyptian henbane)).